Here is a 246-residue protein sequence, read N- to C-terminus: MRYKIVIEYDGSDFIGWQKQNHNSNSIQEILEKAIFKFSKQHVIVYGAGRTDAGVHALGQVAHFDLTTDFETYIVRNAINYHLISHAIAVVHVEKTDTDFHARFSAKRRYYLYKIVNRYSPLTIDRNRAWLVHTPLNVENMIKAVCYIKGNHNFSSFRAKCCQSKSPIKTVDNLSITYNHPYIDINISAISFLHHQVRIIVGTLVECGKGYFPPEHIKTIMEANNRSYAGTTAPSYGLYFVKVDYS.

D52 (nucleophile) is an active-site residue. Y111 is a binding site for substrate.

Belongs to the tRNA pseudouridine synthase TruA family. In terms of assembly, homodimer.

It carries out the reaction uridine(38/39/40) in tRNA = pseudouridine(38/39/40) in tRNA. Functionally, formation of pseudouridine at positions 38, 39 and 40 in the anticodon stem and loop of transfer RNAs. This chain is tRNA pseudouridine synthase A, found in Ehrlichia ruminantium (strain Welgevonden).